We begin with the raw amino-acid sequence, 309 residues long: Homoserine O-succinyltransferase (309 aa).

Residue C142 is the Acyl-thioester intermediate of the active site. Residues K163 and S192 each coordinate substrate. H235 functions as the Proton acceptor in the catalytic mechanism. E237 is a catalytic residue. R249 is a substrate binding site.

It belongs to the MetA family. Homodimer.

It localises to the cytoplasm. The catalysed reaction is L-homoserine + succinyl-CoA = O-succinyl-L-homoserine + CoA. It functions in the pathway amino-acid biosynthesis; L-methionine biosynthesis via de novo pathway; O-succinyl-L-homoserine from L-homoserine: step 1/1. Functionally, transfers a succinyl group from succinyl-CoA to L-homoserine, forming succinyl-L-homoserine. The polypeptide is Homoserine O-succinyltransferase (Escherichia coli O139:H28 (strain E24377A / ETEC)).